Reading from the N-terminus, the 227-residue chain is Calcium-binding protein 1 (227 aa).

Glycine 2 is lipidated: N-myristoyl glycine. The S-palmitoyl cysteine moiety is linked to residue cysteine 4. 4 consecutive EF-hand domains span residues 82-117 (EEIE…MGYM), 136-153 (GHVD…KLLA), 159-194 (IGVK…LLGH), and 196-227 (VGHR…MMSR). Residues aspartate 95, aspartate 97, aspartate 99, tyrosine 101, and aspartate 106 each coordinate Ca(2+). The Ca(2+) site is built by aspartate 172, asparagine 174, aspartate 176, and glutamate 178. Serine 180 carries the phosphoserine modification. 6 residues coordinate Ca(2+): glutamate 183, aspartate 209, asparagine 211, aspartate 213, arginine 215, and glutamate 220.

As to quaternary structure, homodimer; when bound to calcium or magnesium. Interacts (via C-terminus) with ITPR1, ITPR2 and ITPR3. This binding is calcium dependent and the interaction correlates with calcium concentration. An additional calcium-independent interaction with the N-terminus of ITPR1 results in a decreased InsP(3) binding to the receptor. Interacts with CACNA1A (via C-terminal CDB motif) in the pre- and postsynaptic membranes. Interacts with CACNA1D and CACNA1C (via C-terminal C and IQ motifs). The binding to the C motif is calcium independent whereas the binding to IQ requires the presence of calcium and is mutually exclusive with calmodulin binding. Interacts with TRPC5 (via C-terminus). Interacts (via EF-hands 1 and 2) at microtubules with MAP1LC3B. Interacts with MYO1C. Interacts (via EF-hands 1 and 2) with NSMF (via the central NLS-containing motif region), the interaction occurs in a calcium dependent manner after synaptic NMDA receptor stimulation and prevents nuclear import of NSMF. Interacts with SPACA9 homolog. Post-translationally, phosphorylated. The phosphorylation regulates the activity. In terms of tissue distribution, expressed in the inner retina, specifically in amacrine cells and in cone OFF-bipolar cells (at protein level).

Modulates calcium-dependent activity of inositol 1,4,5-triphosphate receptors (ITPRs). Inhibits agonist-induced intracellular calcium signaling. Enhances inactivation and does not support calcium-dependent facilitation of voltage-dependent P/Q-type calcium channels. Causes calcium-dependent facilitation and inhibits inactivation of L-type calcium channels by binding to the same sites as calmodulin in the C-terminal domain of CACNA1C, but has an opposite effect on channel function. Suppresses the calcium-dependent inactivation of CACNA1D. Inhibits TRPC5 channels. Prevents NMDA receptor-induced cellular degeneration. Required for the normal transfer of light signals through the retina. The sequence is that of Calcium-binding protein 1 (Cabp1) from Mus musculus (Mouse).